Reading from the N-terminus, the 233-residue chain is MTIEQNLAQIQQNIQHAVQQAKRPESAVKLLAVSKTKPVEDIYQAYQAGQTAFGENYVQEGVEKIQYFAQKNIPLEWHFIGPLQSNKTKLVAEHFDWMQTLDRKKIADRLNEQRPHYKKPLNVLIQINISDEDSKSGIQPNEMLDLAKQIQNLPHLCLRGLMAIPAPTDDLATQEQAFTQMHSLFEQLKQALPDAQIDTLSMGMTDDMASAIQCGSTMVRIGTAIFGARDYSK.

K35 is modified (N6-(pyridoxal phosphate)lysine).

The protein belongs to the pyridoxal phosphate-binding protein YggS/PROSC family.

Functionally, pyridoxal 5'-phosphate (PLP)-binding protein, which is involved in PLP homeostasis. This is Pyridoxal phosphate homeostasis protein from Pasteurella multocida (strain Pm70).